We begin with the raw amino-acid sequence, 262 residues long: Global transcriptional regulator CodY (262 aa).

Positions 1–159 (MATLLEKTRK…ATTVIGVQLS (159 aa)) are GAF domain. The H-T-H motif DNA-binding region spans 207 to 226 (ASVIADKIGITRSVIVNALR).

The protein belongs to the CodY family.

The protein localises to the cytoplasm. In terms of biological role, DNA-binding global transcriptional regulator which is involved in the adaptive response to starvation and acts by directly or indirectly controlling the expression of numerous genes in response to nutrient availability. During rapid exponential growth, CodY is highly active and represses genes whose products allow adaptation to nutrient depletion. The polypeptide is Global transcriptional regulator CodY (Lactococcus lactis subsp. cremoris (strain SK11)).